Consider the following 560-residue polypeptide: N-acetylglucosamine-6-sulfatase (560 aa).

The tract at residues M1 to A25 is disordered. The first 48 residues, M1–A48, serve as a signal peptide directing secretion. The Ca(2+) site is built by D63, D64, and C99. C99 serves as the catalytic Nucleophile. C99 is subject to 3-oxoalanine (Cys). Residues N119, N125, N191, N206, N218, N287, and N325 are each glycosylated (N-linked (GlcNAc...) asparagine). The Ca(2+) site is built by D334 and N335. N-linked (GlcNAc...) asparagine glycosylation is found at N370, N395, N413, N430, N457, and N488. Phosphoserine is present on S549.

This sequence belongs to the sulfatase family. The cofactor is Ca(2+). In terms of processing, the conversion to 3-oxoalanine (also known as C-formylglycine, FGly), of a serine or cysteine residue in prokaryotes and of a cysteine residue in eukaryotes, is critical for catalytic activity.

The protein resides in the lysosome. It carries out the reaction Hydrolysis of the 6-sulfate groups of the N-acetyl-D-glucosamine 6-sulfate units of heparan sulfate and keratan sulfate.. Its function is as follows. Hydrolyzes 6-sulfate groups in N-acetyl-d-glucosaminide units of heparin sulfate and keratan sulfate. The sequence is that of N-acetylglucosamine-6-sulfatase (GNS) from Bos taurus (Bovine).